Reading from the N-terminus, the 471-residue chain is Uronate isomerase (471 aa).

This sequence belongs to the metallo-dependent hydrolases superfamily. Uronate isomerase family.

The enzyme catalyses D-glucuronate = D-fructuronate. It catalyses the reaction aldehydo-D-galacturonate = keto-D-tagaturonate. Its pathway is carbohydrate metabolism; pentose and glucuronate interconversion. This is Uronate isomerase from Xanthomonas campestris pv. campestris (strain 8004).